The chain runs to 308 residues: Probable D,D-dipeptide transport ATP-binding protein DdpF (308 aa).

Residues 8-243 form the ABC transporter domain; it reads LRDVHINFPA…PAHPYTRLLL (236 aa). ATP is bound at residue 49–56; sequence GESGCGKS.

The protein belongs to the ABC transporter superfamily. In terms of assembly, the complex is composed of two ATP-binding proteins (DdpD and DdpF), two transmembrane proteins (DdpB and DdpC) and a solute-binding protein (DdpA).

The protein resides in the cell inner membrane. Functionally, part of the ABC transporter complex DdpABCDF, which is probably involved in D,D-dipeptide transport. Probably responsible for energy coupling to the transport system. In Escherichia coli (strain K12), this protein is Probable D,D-dipeptide transport ATP-binding protein DdpF.